The following is a 303-amino-acid chain: Ribosomal RNA small subunit methyltransferase H (303 aa).

Residues 33 to 35 (GGH), Asp-52, Phe-78, Asp-99, and Gln-106 contribute to the S-adenosyl-L-methionine site.

Belongs to the methyltransferase superfamily. RsmH family.

It is found in the cytoplasm. The enzyme catalyses cytidine(1402) in 16S rRNA + S-adenosyl-L-methionine = N(4)-methylcytidine(1402) in 16S rRNA + S-adenosyl-L-homocysteine + H(+). Specifically methylates the N4 position of cytidine in position 1402 (C1402) of 16S rRNA. This chain is Ribosomal RNA small subunit methyltransferase H, found in Phytoplasma australiense.